We begin with the raw amino-acid sequence, 835 residues long: Leucine--tRNA ligase (835 aa).

Positions 36–46 match the 'HIGH' region motif; that stretch reads PYPSGKIHVGH. Positions 602 to 606 match the 'KMSKS' region motif; sequence KMSKS. Position 605 (lysine 605) interacts with ATP.

It belongs to the class-I aminoacyl-tRNA synthetase family.

It localises to the cytoplasm. It carries out the reaction tRNA(Leu) + L-leucine + ATP = L-leucyl-tRNA(Leu) + AMP + diphosphate. The sequence is that of Leucine--tRNA ligase from Rickettsia peacockii (strain Rustic).